The primary structure comprises 270 residues: Small ribosomal subunit protein eS1 (270 aa).

Disordered stretches follow at residues 1 to 21 and 238 to 270; these read MAVG…KKKV and GGGK…QESV.

This sequence belongs to the eukaryotic ribosomal protein eS1 family. As to quaternary structure, component of the small ribosomal subunit. Mature ribosomes consist of a small (40S) and a large (60S) subunit. The 40S subunit contains about 33 different proteins and 1 molecule of RNA (18S). The 60S subunit contains about 49 different proteins and 3 molecules of RNA (28S, 5.8S and 5S).

Its subcellular location is the cytoplasm. This Aedes aegypti (Yellowfever mosquito) protein is Small ribosomal subunit protein eS1.